Reading from the N-terminus, the 533-residue chain is DNA-directed RNA polymerase III subunit RPC3 (533 aa).

The disordered stretch occupies residues 161–183 (PLVPDTDSSDPGPPPPAPNLVIN). S194 bears the Phosphoserine mark. A disordered region spans residues 197–228 (GKGKRRRSSDEDAAGEPKAKKPRCTDNEEPTP). Residues 211–222 (GEPKAKKPRCTD) are compositionally biased toward basic and acidic residues.

The protein belongs to the eukaryotic RPC3/POLR3C RNA polymerase subunit family. In terms of assembly, component of the RNA polymerase III complex consisting of 17 subunits: a ten-subunit horseshoe-shaped catalytic core composed of POLR3A/RPC1, POLR3B/RPC2, POLR1C/RPAC1, POLR1D/RPAC2, POLR3K/RPC10, POLR2E/RPABC1, POLR2F/RPABC2, POLR2H/RPABC3, POLR2K/RPABC4 and POLR2L/RPABC5; a mobile stalk composed of two subunits POLR3H/RPC8 and CRCP/RPC9, protruding from the core and functioning primarily in transcription initiation; and additional subunits homologous to general transcription factors of the RNA polymerase II machinery, POLR3C/RPC3-POLR3F/RPC6-POLR3G/RPC7 heterotrimer required for transcription initiation and POLR3D/RPC4-POLR3E/RPC5 heterodimer involved in both transcription initiation and termination. Directly interacts with POLR3G/RPC7 and POLR3GL. Directly interacts with POLR3F/RPC6. Interacts with GTF3C4. As part of the RNA polymerase III complex, interacts with PKP2.

It is found in the nucleus. Its function is as follows. DNA-dependent RNA polymerase catalyzes the transcription of DNA into RNA using the four ribonucleoside triphosphates as substrates. Specific peripheric component of RNA polymerase III (Pol III) which synthesizes small non-coding RNAs including 5S rRNA, snRNAs, tRNAs and miRNAs from at least 500 distinct genomic loci. Part of POLR3C/RPC3-POLR3F/RPC6-POLR3G/RPC7 heterotrimer, coordinates the dynamics of Pol III stalk and clamp modules during the transition from apo to elongation state. Pol III plays a key role in sensing and limiting infection by intracellular bacteria and DNA viruses. Acts as a nuclear and cytosolic DNA sensor involved in innate immune response. Can sense non-self dsDNA that serves as template for transcription into dsRNA. The non-self RNA polymerase III transcripts, such as Epstein-Barr virus-encoded RNAs (EBERs) induce type I interferon and NF-kappa-B through the RIG-I pathway. Preferentially binds single-stranded DNA (ssDNA) in a sequence-independent manner. This Rattus norvegicus (Rat) protein is DNA-directed RNA polymerase III subunit RPC3.